An 891-amino-acid polypeptide reads, in one-letter code: Protein SEY1 homolog (891 aa).

The Cytoplasmic segment spans residues 1-754 (MNLHLVDSDG…LRAAEAGNQR (754 aa)). The GB1/RHD3-type G domain maps to 52–318 (GLNYHVVGVF…RCSDYLFSYH (267 aa)). 62 to 69 (GGQSSGKS) provides a ligand contact to GTP. A helical membrane pass occupies residues 755-775 (LPAWVIPALFILGWNELLYVL). Residues 776–778 (TSP) lie on the Lumenal side of the membrane. The chain crosses the membrane as a helical span at residues 779–799 (ALLVLVVVICAVFFRQFFVSQ). At 800–891 (WHAFEETGPA…MRHRTTHKLD (92 aa)) the chain is on the cytoplasmic side. Residues 863–880 (STHADPAPSNTTVPTAQA) show a composition bias toward polar residues. The disordered stretch occupies residues 863–891 (STHADPAPSNTTVPTAQATMRHRTTHKLD). Positions 882–891 (MRHRTTHKLD) are enriched in basic residues.

It belongs to the TRAFAC class dynamin-like GTPase superfamily. GB1/RHD3 GTPase family. RHD3 subfamily.

It localises to the endoplasmic reticulum membrane. Its function is as follows. Probable GTP-binding protein that may be involved in cell development. The protein is Protein SEY1 homolog of Leishmania braziliensis.